The following is a 180-amino-acid chain: Cytidylate kinase (180 aa).

An ATP-binding site is contributed by 7–15 (GPPGSGTTT).

Belongs to the cytidylate kinase family. Type 2 subfamily.

The protein resides in the cytoplasm. It carries out the reaction CMP + ATP = CDP + ADP. It catalyses the reaction dCMP + ATP = dCDP + ADP. This Archaeoglobus fulgidus (strain ATCC 49558 / DSM 4304 / JCM 9628 / NBRC 100126 / VC-16) protein is Cytidylate kinase (cmk).